Consider the following 2766-residue polypeptide: Thyroglobulin (2766 aa).

An N-terminal signal peptide occupies residues 1-20 (MTALVLWVSTLLSSVCLVAA). An Iodotyrosine; alternate modification is found at Y25. A Sulfotyrosine; alternate modification is found at Y25. Y25 carries the thyroxine; alternate modification. Residue Y25 is modified to Triiodothyronine; alternate. Thyroglobulin type-1 domains lie at 32 to 93 (LRPC…PTVC), 94 to 161 (LSFC…PTRC), 162 to 298 (PRSC…RFRC), and 299 to 359 (PTKC…PPSC). 8 disulfides stabilise this stretch: C35–C53, C64–C71, C73–C93, C97–C121, C132–C139, C141–C161, C165–C184, and C195–C236. Y109 bears the Iodotyrosine mark. N111 is a glycosylation site (N-linked (GlcNAc...) asparagine). The residue at position 150 (Y150) is an Iodotyrosine; alternate. Residue Y150 is modified to Diiodotyrosine; alternate. The N-linked (GlcNAc...) asparagine glycan is linked to N199. An iodotyrosine mark is found at Y235 and Y259. 9 disulfides stabilise this stretch: C302–C320, C331–C337, C339–C359, C365–C620, C408–C608, C631–C636, C638–C658, C662–C687, and C698–C703. N484 and N496 each carry an N-linked (GlcNAc...) asparagine glycan. Thyroglobulin type-1 domains lie at 605–658 (AQAC…RPRC), 659–726 (PTKC…AKQC), 727–922 (PSVC…IPAC), 923–1074 (PGPC…MPQC), 1075–1146 (PTNC…SAQC), and 1147–1211 (PGLC…QPAC). Y704 carries the post-translational modification Iodotyrosine; alternate. Residue Y704 is modified to Thyroxine; alternate. Y704 bears the Triiodothyronine; alternate mark. Y704 is modified (diiodotyrosine; alternate). Cystine bridges form between C705-C726, C730-C763, C774-C899, C901-C922, C926-C1032, C1043-C1050, C1052-C1074, C1078-C1109, C1127-C1146, C1150-C1170, C1182-C1189, C1191-C1211, C1216-C1265, C1232-C1246, C1306-C1356, and C1331-C1347. N748 carries an N-linked (GlcNAc...) asparagine glycan. Y785 is modified (iodotyrosine). N-linked (GlcNAc...) asparagine glycosylation is present at N817. The residue at position 867 (Y867) is an Iodotyrosine; alternate. Residue Y867 is modified to Diiodotyrosine; alternate. Y884 carries the diiodotyrosine modification. N948 carries N-linked (GlcNAc...) asparagine glycosylation. The residue at position 993 (Y993) is an Iodotyrosine; alternate. The residue at position 993 (Y993) is a Diiodotyrosine; alternate. N-linked (GlcNAc...) asparagine glycosylation is present at N1141. Y1310 is subject to Iodotyrosine. Y1310 carries the thyroxine modification. 2 N-linked (GlcNAc...) asparagine glycosylation sites follow: N1349 and N1365. Intrachain disulfides connect C1441-C1458, C1461-C1472, C1475-C1489, C1492-C1509, C1513-C1522, C1542-C1564, C1602-C1626, C1606-C1612, and C1638-C1661. Type II repeat units lie at residues 1455 to 1468 (ALGC…SFSQ), 1469 to 1485 (DGRC…EQAG), and 1486 to 1502 (SSAC…ITTG). One can recognise a Thyroglobulin type-1 11 domain in the interval 1510-1564 (VTDCQKNEAGLQCDQNGQYQASQKNRDSGEVFCVDSEGRKLQWLQTEAGLSESQC). The Type IIIA repeat unit spans residues 1602–1722 (CLTDCANDEA…GANLTDTHTY (121 aa)). N1715, N1729, N1773, and N1864 each carry an N-linked (GlcNAc...) asparagine glycan. Cystine bridges form between C1723-C1748, C1727-C1733, C1732-C1834, and C1759-C1776. A Type IIIB repeat occupies 1723–1889 (CLLACDNDSC…LFSAEQANLW (167 aa)). 7 cysteine pairs are disulfide-bonded: C1890–C1916, C1894–C1901, C1925–C1936, C1993–C2021, C1997–C2003, C2002–C2073, and C2032–C2045. Residues 1890–1992 (CLSRCAQEPI…GKLISNGFFE (103 aa)) form a Type IIIA repeat. An N-linked (GlcNAc...) asparagine glycan is attached at N1935. The stretch at 1993-2125 (CERLCDRDPC…AATSNFSMAQ (133 aa)) is one Type IIIB repeat. An N-linked (GlcNAc...) asparagine glycan is attached at N2010. N2120 carries an N-linked (GlcNAc...) asparagine glycan. The stretch at 2126–2183 (DFCLQQCSRHQDCLVTTLQIQPGVVRCVFYPDIQNCIHSLRSHTCWLLLHEEATYIYR) is one Type IIIA repeat. Disulfide bonds link C2128-C2152, C2132-C2138, and C2161-C2170. Y2182 is subject to Iodotyrosine. Residues 2186–2766 (GIPLVQSDVT…LEPVPKSYSK (581 aa)) are cholinesterase-like (ChEL). The N-linked (GlcNAc...) asparagine glycan is linked to N2249. A disulfide bridge connects residues C2263 and C2280. A glycan (N-linked (GlcNAc...) asparagine) is linked at N2294. C2441 and C2452 are oxidised to a cystine. Y2539 carries the thyroxine modification. Y2572 is subject to Iodotyrosine; alternate. Y2572 is modified (thyroxine; alternate). Triiodothyronine; alternate is present on Y2572. A Diiodotyrosine; alternate modification is found at Y2572. An N-linked (GlcNAc...) asparagine glycan is attached at N2581. Y2586 and Y2616 each carry iodotyrosine. C2590 and C2714 are disulfide-bonded. At Y2696 the chain carries Diiodotyrosine. Residues 2729 to 2766 (GAKDAQLTKSEEEDLEVGPGLEEDLSGSLEPVPKSYSK) form a disordered region. Over residues 2739–2753 (EEEDLEVGPGLEEDL) the composition is skewed to acidic residues. Residue Y2764 is modified to Iodotyrosine; alternate. A Thyroxine; alternate modification is found at Y2764. Triiodothyronine; alternate is present on Y2764. Y2764 carries the post-translational modification Diiodotyrosine; alternate.

Belongs to the type-B carboxylesterase/lipase family. Monomer. Homodimer (via ChEL region); occurs in the endoplasmic reticulum and is required for export to the Golgi apparatus. Homooligomer; disulfide-linked; stored in this form in the thyroid follicle lumen. Post-translationally, iodinated on tyrosine residues by TPO. There are 4 pairs of iodinated tyrosines used for coupling: acceptor Tyr-25 is coupled to donor Tyr-150 or Tyr-235, acceptor Tyr-2572 is coupled to donor Tyr-2539, acceptor Tyr-2764 in monomer 1 is coupled to donor Tyr-2764 in monomer 2 and acceptor Tyr-1310 in monomer 1 is coupled to donor Tyr-109 in monomer 2. Sulfated tyrosines are desulfated during iodination. In terms of processing, undergoes sequential proteolysis by cathepsins to release thyroxine (T4) and triiodothyronine (T3) hormones. In the thyroid follicle lumen, cross-linked TG (storage form) is solubilized by limited proteolysis mediated by cathepsins CTSB and/or CTSL. Partially cleaved TG is further processed by CTSK/cathepsin K and/or CTSL resulting in the release of T4. Following endocytosis, further processing occurs leading to the release of T3 and more T4 hormones. Specifically expressed in the thyroid gland.

The protein resides in the secreted. Acts as a substrate for the production of iodinated thyroid hormones thyroxine (T4) and triiodothyronine (T3). The synthesis of T3 and T4 involves iodination of selected tyrosine residues of TG/thyroglobulin followed by their oxidative coupling. Following TG re-internalization and lysosomal-mediated proteolysis, T3 and T4 are released from the polypeptide backbone leading to their secretion into the bloodstream. One dimer produces 7 thyroid hormone molecules. This is Thyroglobulin (Tg) from Mus musculus (Mouse).